Reading from the N-terminus, the 401-residue chain is Argininosuccinate synthase (401 aa).

A8 to S16 provides a ligand contact to ATP. Y85 is a binding site for L-citrulline. ATP is bound at residue G115. L-aspartate contacts are provided by T117, N121, and D122. Position 121 (N121) interacts with L-citrulline. L-citrulline-binding residues include R125, S173, E258, and Y270.

The protein belongs to the argininosuccinate synthase family. Type 1 subfamily. In terms of assembly, homotetramer.

It is found in the cytoplasm. It catalyses the reaction L-citrulline + L-aspartate + ATP = 2-(N(omega)-L-arginino)succinate + AMP + diphosphate + H(+). It participates in amino-acid biosynthesis; L-arginine biosynthesis; L-arginine from L-ornithine and carbamoyl phosphate: step 2/3. The polypeptide is Argininosuccinate synthase (Staphylococcus aureus (strain MSSA476)).